A 37-amino-acid polypeptide reads, in one-letter code: Large ribosomal subunit protein bL36c (37 aa).

This sequence belongs to the bacterial ribosomal protein bL36 family.

The protein localises to the plastid. Its subcellular location is the chloroplast. This is Large ribosomal subunit protein bL36c (rpl36) from Cyanidium caldarium (Red alga).